A 77-amino-acid polypeptide reads, in one-letter code: Large ribosomal subunit protein uL29 (77 aa).

The protein belongs to the universal ribosomal protein uL29 family.

The polypeptide is Large ribosomal subunit protein uL29 (Mycolicibacterium vanbaalenii (strain DSM 7251 / JCM 13017 / BCRC 16820 / KCTC 9966 / NRRL B-24157 / PYR-1) (Mycobacterium vanbaalenii)).